A 152-amino-acid chain; its full sequence is MGRLNYSITPEGRFARAMGVELPISPKHAREICRAIRGMKVEAAERFLQDVIALKRAVPFRRYNRNVPHRHGLVGWPAGRFPQKAARAVLRVLENAIGNAEYKGLEKERLVIGYANTKKGRTFRGWMPRAMGRATPKNQETVSIEMILTEVR.

This sequence belongs to the universal ribosomal protein uL22 family. Part of the 50S ribosomal subunit.

Functionally, this protein binds specifically to 23S rRNA. It makes multiple contacts with different domains of the 23S rRNA in the assembled 50S subunit and ribosome. In terms of biological role, the globular domain of the protein is located near the polypeptide exit tunnel on the outside of the subunit, while an extended beta-hairpin is found that lines the wall of the exit tunnel in the center of the 70S ribosome. In Methanothrix thermoacetophila (strain DSM 6194 / JCM 14653 / NBRC 101360 / PT) (Methanosaeta thermophila), this protein is Large ribosomal subunit protein uL22.